A 463-amino-acid polypeptide reads, in one-letter code: UDP-N-acetylmuramate--L-alanine ligase (463 aa).

112 to 118 (GTHGKTT) provides a ligand contact to ATP.

Belongs to the MurCDEF family.

It localises to the cytoplasm. It carries out the reaction UDP-N-acetyl-alpha-D-muramate + L-alanine + ATP = UDP-N-acetyl-alpha-D-muramoyl-L-alanine + ADP + phosphate + H(+). It participates in cell wall biogenesis; peptidoglycan biosynthesis. In terms of biological role, cell wall formation. The polypeptide is UDP-N-acetylmuramate--L-alanine ligase (Thiobacillus denitrificans (strain ATCC 25259 / T1)).